The sequence spans 193 residues: Potassium-transporting ATPase KdpC subunit (193 aa).

A helical transmembrane segment spans residues 14 to 34 (ITFTFLVLCGLVYPLIVTGIA).

This sequence belongs to the KdpC family. In terms of assembly, the system is composed of three essential subunits: KdpA, KdpB and KdpC.

The protein localises to the cell membrane. Its function is as follows. Part of the high-affinity ATP-driven potassium transport (or Kdp) system, which catalyzes the hydrolysis of ATP coupled with the electrogenic transport of potassium into the cytoplasm. This subunit acts as a catalytic chaperone that increases the ATP-binding affinity of the ATP-hydrolyzing subunit KdpB by the formation of a transient KdpB/KdpC/ATP ternary complex. The chain is Potassium-transporting ATPase KdpC subunit from Bacillus thuringiensis subsp. konkukian (strain 97-27).